Consider the following 336-residue polypeptide: tRNA N6-adenosine threonylcarbamoyltransferase (336 aa).

2 residues coordinate Fe cation: H114 and H118. Residues 136 to 140 (LVSGG), D169, G182, D186, and N275 contribute to the substrate site. D301 lines the Fe cation pocket.

It belongs to the KAE1 / TsaD family. The cofactor is Fe(2+).

The protein localises to the cytoplasm. It carries out the reaction L-threonylcarbamoyladenylate + adenosine(37) in tRNA = N(6)-L-threonylcarbamoyladenosine(37) in tRNA + AMP + H(+). Required for the formation of a threonylcarbamoyl group on adenosine at position 37 (t(6)A37) in tRNAs that read codons beginning with adenine. Is involved in the transfer of the threonylcarbamoyl moiety of threonylcarbamoyl-AMP (TC-AMP) to the N6 group of A37, together with TsaE and TsaB. TsaD likely plays a direct catalytic role in this reaction. This chain is tRNA N6-adenosine threonylcarbamoyltransferase, found in Streptococcus pneumoniae (strain Taiwan19F-14).